Reading from the N-terminus, the 100-residue chain is Small ribosomal subunit protein uS14m (100 aa).

It belongs to the universal ribosomal protein uS14 family.

It is found in the mitochondrion. The protein is Small ribosomal subunit protein uS14m (RPS14) of Brassica napus (Rape).